Consider the following 75-residue polypeptide: UPF0352 protein plu2871 (75 aa).

It belongs to the UPF0352 family.

The polypeptide is UPF0352 protein plu2871 (Photorhabdus laumondii subsp. laumondii (strain DSM 15139 / CIP 105565 / TT01) (Photorhabdus luminescens subsp. laumondii)).